The sequence spans 114 residues: Transmembrane protein 14DP (114 aa).

4 consecutive transmembrane segments (helical) span residues 8–28 (LVPLHWFGFGYTALVVSGGIV), 36–56 (APSLAAGLLFGSLAGVGAYQL), 63–80 (VWDFLAATSVTFVGIMGM), and 83–103 (YYYGKFMPVGLIAGASLLMAA).

The protein belongs to the TMEM14 family.

Its subcellular location is the membrane. The protein is Transmembrane protein 14DP (TMEM14DP) of Homo sapiens (Human).